The following is a 176-amino-acid chain: Mitochondrial inner membrane protein Mpv17 (176 aa).

Transmembrane regions (helical) follow at residues 18 to 38, 53 to 73, 94 to 114, and 131 to 151; these read VQVL…QQLV, TMAS…YRVL, GGFA…LNGL, and LITN…LVPL.

It belongs to the peroxisomal membrane protein PXMP2/4 family.

The protein localises to the mitochondrion inner membrane. Non-selective channel that modulates the membrane potential under normal conditions and oxidative stress, and is involved in mitochondrial homeostasis. Involved in mitochondrial deoxynucleoside triphosphates (dNTP) pool homeostasis and mitochondrial DNA (mtDNA) maintenance. May be involved in the regulation of reactive oxygen species metabolism and the control of oxidative phosphorylation. This Bos taurus (Bovine) protein is Mitochondrial inner membrane protein Mpv17.